We begin with the raw amino-acid sequence, 72 residues long: Translation initiation factor IF-1 1 (72 aa).

An S1-like domain is found at 1–72 (MAKDDVIQMQ…SRARIVFRAK (72 aa)).

The protein belongs to the IF-1 family. Component of the 30S ribosomal translation pre-initiation complex which assembles on the 30S ribosome in the order IF-2 and IF-3, IF-1 and N-formylmethionyl-tRNA(fMet); mRNA recruitment can occur at any time during PIC assembly.

The protein resides in the cytoplasm. Its function is as follows. One of the essential components for the initiation of protein synthesis. Stabilizes the binding of IF-2 and IF-3 on the 30S subunit to which N-formylmethionyl-tRNA(fMet) subsequently binds. Helps modulate mRNA selection, yielding the 30S pre-initiation complex (PIC). Upon addition of the 50S ribosomal subunit IF-1, IF-2 and IF-3 are released leaving the mature 70S translation initiation complex. This is Translation initiation factor IF-1 1 from Ralstonia nicotianae (strain ATCC BAA-1114 / GMI1000) (Ralstonia solanacearum).